The primary structure comprises 80 residues: MAAVKKHLRFALVAAITIALLVAGSVADESSEDIDNIVIKTPLDIPRCDSPLCSLFRIGLCGDKCFCVPLPIVGICVPSV.

A signal peptide spans methionine 1 to alanine 27. Positions aspartate 28–aspartate 44 are excised as a propeptide. 3 disulfide bridges follow: cysteine 48–cysteine 65, cysteine 53–cysteine 67, and cysteine 61–cysteine 76.

The protein belongs to the gympietide family. Expressed in trichomes, that are stiff epidermal hairs located on the surface of petioles and leaves. Not expressed in other aerial parts.

Its subcellular location is the secreted. Functionally, neurotoxin certainly responsible for the defensive, persistent, and painful stings of the giant stinging tree. Inhibits inactivation of Nav1.7/SCN9A sodium channel in sensory neurons by directly interacting with TMEM233, a newly described Nav-interacting protein. Has virtually no effect on Nav1.7/SCN9A function in heterologous expression systems and in neurons that do not express TMEM233. Also weakly but significantly affects Nav1.8/SCN10A. Coexpression of TMEM233 with Nav also confers ExTxA sensitivity to Nav1.1-Nav1.6. On the Nav1.7/SCN9A channel, causes a significant hyperpolarizing shift in the voltage dependence of activation. Its effects on Nav currents are irreversible, with no apparent reduction in activity even after repeated wash steps over 30 minutes. In vivo, induces nocifensive behavior in mice (licking or biting and shaking or lifting of the affected paw) lasting for approximately 1 hour. This chain is Moroidotoxin A, found in Dendrocnide moroides (Gympie stinging tree).